We begin with the raw amino-acid sequence, 824 residues long: Intraflagellar transport protein 88 homolog (824 aa).

Residues 113-134 (FDPLSQSRGPASPLEAKKKDSP) are disordered. 12 TPR repeats span residues 197–230 (YSVL…KMFS), 233–266 (GILK…VPSV), 272–305 (IKIM…APNL), 307–338 (AGYN…PLEI), 415–448 (NDLE…DSRV), 450–483 (SAAA…DRYN), 484–517 (PAAL…DSSC), 518–551 (TEAL…LRNS), 552–585 (AEVL…IPTD), 586–619 (PQVL…FPCN), 620–653 (IEVI…QPTQ), and 654–687 (VKWQ…FPEN). A disordered region spans residues 724–824 (EQRIKSGRDG…EELGDDLLPE (101 aa)). Positions 748-757 (DSGQNYSASS) are enriched in polar residues. A compositionally biased stretch (basic and acidic residues) spans 797-808 (ERPKTAAKKRID). Residues 809 to 824 (EDDFADEELGDDLLPE) show a composition bias toward acidic residues.

As to quaternary structure, component of the IFT complex B, at least composed of IFT20, IFT22, IFT25, IFT27, IFT46, IFT52, TRAF3IP1/IFT54, IFT57, IFT74, IFT80, IFT81, and IFT88. Interacts with IFT20, IFT22, IFT25, IFT27, IFT52, TRAF3IP1, IFT74, IFT80 and IFT81. Interacts with IFT172. Interacts with IFT57. Interacts with IFT46. Interacts with IFT70B. Interacts with C2CD3. Interacts with ENTR1 (via N-terminus). Interacts with LRRC56. Interacts with DZIP1. Interacts with CCDC38. Interacts with CCDC146. Interacts with CFAP53. Expressed in the heart, brain, liver, lung, kidney, skeletal muscle and pancreas.

It is found in the cytoplasm. Its subcellular location is the cytoskeleton. The protein resides in the microtubule organizing center. It localises to the centrosome. The protein localises to the centriole. It is found in the cell projection. Its subcellular location is the cilium. The protein resides in the cilium basal body. It localises to the flagellum. Positively regulates primary cilium biogenesis. Also involved in autophagy since it is required for trafficking of ATG16L and the expansion of the autophagic compartment. This chain is Intraflagellar transport protein 88 homolog (IFT88), found in Homo sapiens (Human).